We begin with the raw amino-acid sequence, 332 residues long: MKINLDRTSSGFCIGVQGTIHVAEEKLAQSGELYCLGDVVHNEVEVKRLEALGMETIDIPAFEELRNAEVLIRAHGEPPSTYETARKNNLAITDTTCPVVAKLQRTAKMLHQLGYQVVIYGKKVHPEVIGINGQCDDEGVVIKHPDLSDPEEIAPLDLSRKTALISQTTMDVPGFYELKRNLEKLFAEHGHRNPGTQSGEWMAVRDIDITAEKTGALAMPKLVFKDTICRQVSSRNGKLRDFALANDCIVFAAGRKSSNGQVLYSICKDANPHSYFIEDVDEIRPEWFVGENGKPVESVGICGATSTPMWLLEKVANYIDKTFGDGSSNPNA.

A [4Fe-4S] cluster-binding site is contributed by Cys-13. Residues His-41 and His-75 each coordinate (2E)-4-hydroxy-3-methylbut-2-enyl diphosphate. The dimethylallyl diphosphate site is built by His-41 and His-75. Positions 41 and 75 each coordinate isopentenyl diphosphate. Cys-97 serves as a coordination point for [4Fe-4S] cluster. A (2E)-4-hydroxy-3-methylbut-2-enyl diphosphate-binding site is contributed by His-125. His-125 is a binding site for dimethylallyl diphosphate. His-125 serves as a coordination point for isopentenyl diphosphate. Glu-127 functions as the Proton donor in the catalytic mechanism. Residue Thr-168 coordinates (2E)-4-hydroxy-3-methylbut-2-enyl diphosphate. [4Fe-4S] cluster is bound at residue Cys-229. (2E)-4-hydroxy-3-methylbut-2-enyl diphosphate contacts are provided by Ser-257, Ser-258, Asn-259, and Ser-306. Dimethylallyl diphosphate-binding residues include Ser-257, Ser-258, Asn-259, and Ser-306. Residues Ser-257, Ser-258, Asn-259, and Ser-306 each contribute to the isopentenyl diphosphate site.

Belongs to the IspH family. The cofactor is [4Fe-4S] cluster.

It catalyses the reaction isopentenyl diphosphate + 2 oxidized [2Fe-2S]-[ferredoxin] + H2O = (2E)-4-hydroxy-3-methylbut-2-enyl diphosphate + 2 reduced [2Fe-2S]-[ferredoxin] + 2 H(+). It carries out the reaction dimethylallyl diphosphate + 2 oxidized [2Fe-2S]-[ferredoxin] + H2O = (2E)-4-hydroxy-3-methylbut-2-enyl diphosphate + 2 reduced [2Fe-2S]-[ferredoxin] + 2 H(+). The protein operates within isoprenoid biosynthesis; dimethylallyl diphosphate biosynthesis; dimethylallyl diphosphate from (2E)-4-hydroxy-3-methylbutenyl diphosphate: step 1/1. It functions in the pathway isoprenoid biosynthesis; isopentenyl diphosphate biosynthesis via DXP pathway; isopentenyl diphosphate from 1-deoxy-D-xylulose 5-phosphate: step 6/6. Functionally, catalyzes the conversion of 1-hydroxy-2-methyl-2-(E)-butenyl 4-diphosphate (HMBPP) into a mixture of isopentenyl diphosphate (IPP) and dimethylallyl diphosphate (DMAPP). Acts in the terminal step of the DOXP/MEP pathway for isoprenoid precursor biosynthesis. The chain is 4-hydroxy-3-methylbut-2-enyl diphosphate reductase from Chlorobaculum tepidum (strain ATCC 49652 / DSM 12025 / NBRC 103806 / TLS) (Chlorobium tepidum).